The sequence spans 160 residues: Twist-related protein 2 (160 aa).

Residues Met-1–Glu-63 form a disordered region. Residues Lys-27–Lys-37 are compositionally biased toward basic residues. Positions Ser-66–Leu-117 constitute a bHLH domain.

In terms of assembly, efficient DNA binding requires dimerization with another bHLH protein. Forms a heterodimer with TCF3/E12. Also interacts with MEF2C. As to expression, expressed at low levels in sclerotome and dermatome of somites, and in limb buds at 10.5 dpc. Accumulates predominantly in dermatome, prevertebrae and derivatives of branchial arches by 13 dpc. Also expressed near surface of embryo and in chondrogenic cells. In adult, expressed at low levels in skin, bladder, uterus, aorta and heart.

It localises to the nucleus. The protein resides in the cytoplasm. Binds to the E-box consensus sequence 5'-CANNTG-3' as a heterodimer and inhibits transcriptional activation by MYOD1, MYOG, MEF2A and MEF2C. Also represses expression of pro-inflammatory cytokines such as TNFA and IL1B. Involved in postnatal glycogen storage and energy metabolism. Inhibits the premature or ectopic differentiation of preosteoblast cells during osteogenesis, possibly by changing the internal signal transduction response of osteoblasts to external growth factors. The protein is Twist-related protein 2 (Twist2) of Mus musculus (Mouse).